The primary structure comprises 509 residues: Putative cytochrome P450 CYP13A8 (509 aa).

Position 455 (C455) interacts with heme.

It belongs to the cytochrome P450 family. The cofactor is heme.

Its function is as follows. Cytochromes P450 are a group of heme-thiolate monooxygenases. They oxidize a variety of structurally unrelated compounds, including steroids, fatty acids, and xenobiotics. The sequence is that of Putative cytochrome P450 CYP13A8 (cyp-13A8) from Caenorhabditis elegans.